A 223-amino-acid chain; its full sequence is MKRTKSIRHASFRKNWSARHLTPVALAVATVFMLAGCEKSDETVSLYQNADDCSAANPGKSAECTTAYNNALKEAERTAPKYATREDCVAEFGEGQCQQAPAQAGMAPENQAQAQQSSGSFWMPLMAGYMMGRLMGGGAGFAQQPLFSSKNPASPAYGKYTDATGKNYGAAQPGRTMTVPKTAMAPKPATTTTVTRGGFGESVAKQSTMQRSATGTSSRSMGG.

Positions 178-195 (TVPKTAMAPKPATTTTVT) are enriched in low complexity. Positions 178 to 223 (TVPKTAMAPKPATTTTVTRGGFGESVAKQSTMQRSATGTSSRSMGG) are disordered. The span at 204–223 (AKQSTMQRSATGTSSRSMGG) shows a compositional bias: polar residues.

This sequence belongs to the UPF0441 family.

The polypeptide is UPF0441 protein YgiB (Shigella flexneri serotype 5b (strain 8401)).